We begin with the raw amino-acid sequence, 72 residues long: uncharacterized protein (72 aa).

It belongs to the ycf76 family.

It is found in the plastid. The protein localises to the chloroplast. This is an uncharacterized protein from Oryza nivara (Indian wild rice).